We begin with the raw amino-acid sequence, 89 residues long: MSITAERKAEVIKTNAKKAGDTGSPEVQVAILSERIANLTEHFKTHSKDNHSRRGLLKLVSTRRSLLDYVKKKDEARYRALLEKHNIRR.

A compositionally biased stretch (basic and acidic residues) spans 1-11; that stretch reads MSITAERKAEV. The segment at 1–24 is disordered; sequence MSITAERKAEVIKTNAKKAGDTGS.

The protein belongs to the universal ribosomal protein uS15 family. As to quaternary structure, part of the 30S ribosomal subunit. Forms a bridge to the 50S subunit in the 70S ribosome, contacting the 23S rRNA.

Functionally, one of the primary rRNA binding proteins, it binds directly to 16S rRNA where it helps nucleate assembly of the platform of the 30S subunit by binding and bridging several RNA helices of the 16S rRNA. Its function is as follows. Forms an intersubunit bridge (bridge B4) with the 23S rRNA of the 50S subunit in the ribosome. This chain is Small ribosomal subunit protein uS15, found in Afipia carboxidovorans (strain ATCC 49405 / DSM 1227 / KCTC 32145 / OM5) (Oligotropha carboxidovorans).